A 79-amino-acid chain; its full sequence is Beta-defensin 15 (79 aa).

The signal sequence occupies residues Met-1–Ala-20. 3 cysteine pairs are disulfide-bonded: Cys-26-Cys-53, Cys-33-Cys-47, and Cys-37-Cys-54.

This sequence belongs to the beta-defensin family. As to expression, expressed in testis and to a lesser extent in epididymis (caput, corpus and cauda). Also weakly expressed in kidneys and colon.

The protein localises to the secreted. Functionally, has antibacterial activity. This is Beta-defensin 15 (Defb15) from Mus musculus (Mouse).